The sequence spans 381 residues: Translation initiation factor eIF2B subunit beta (381 aa).

Positions 125-148 (LQKPEQPHQNRKNSSGSSSMKTKT) are disordered. Polar residues predominate over residues 136–145 (KNSSGSSSMK).

Belongs to the eIF-2B alpha/beta/delta subunits family. As to quaternary structure, component of the translation initiation factor 2B (eIF2B) complex which is a heterodecamer of two sets of five different subunits: alpha, beta, gamma, delta and epsilon. Subunits alpha, beta and delta comprise a regulatory subcomplex and subunits epsilon and gamma comprise a catalytic subcomplex. Within the complex, the hexameric regulatory complex resides at the center, with the two heterodimeric catalytic subcomplexes bound on opposite sides.

The protein resides in the cytoplasm. Its subcellular location is the cytosol. Its function is as follows. Acts as a component of the translation initiation factor 2B (eIF2B) complex, which catalyzes the exchange of GDP for GTP on the eukaryotic initiation factor 2 (eIF2) complex gamma subunit. Its guanine nucleotide exchange factor activity is repressed when bound to eIF2 complex phosphorylated on the alpha subunit, thereby limiting the amount of methionyl-initiator methionine tRNA available to the ribosome and consequently global translation is repressed. It activates the synthesis of GCN4 in yeast under amino acid starvation conditions by suppressing the inhibitory effects of multiple AUG codons present in the leader of GCN4 mRNA. It may promote either repression or activation of GCN4 expression depending on amino acid availability. GCD6 and GCD7 repress GCN4 expression at the translational level by ensuring that ribosomes which have translated UORF1 will reinitiate at UORF2, -3, or -4 and thus fail to reach the GCN4 start site. The polypeptide is Translation initiation factor eIF2B subunit beta (GCD7) (Saccharomyces cerevisiae (strain ATCC 204508 / S288c) (Baker's yeast)).